The primary structure comprises 647 residues: UvrABC system protein C (647 aa).

The GIY-YIG domain occupies 16–95; it reads VEPGVYRFRD…IKEFDPRFNV (80 aa). The UVR domain maps to 208–243; sequence DRYARELEQQMNAAAENLDFERAARLRDDRSALKRA.

The protein belongs to the UvrC family. Interacts with UvrB in an incision complex.

The protein localises to the cytoplasm. The UvrABC repair system catalyzes the recognition and processing of DNA lesions. UvrC both incises the 5' and 3' sides of the lesion. The N-terminal half is responsible for the 3' incision and the C-terminal half is responsible for the 5' incision. This is UvrABC system protein C from Mycobacterium marinum (strain ATCC BAA-535 / M).